We begin with the raw amino-acid sequence, 194 residues long: CASP-like protein 2D1 (194 aa).

Positions 1–16 are enriched in basic and acidic residues; sequence MRDNNNNNTREEERSS. Residues 1-26 form a disordered region; that stretch reads MRDNNNNNTREEERSSSSKQQQPQAP. At 1–30 the chain is on the cytoplasmic side; the sequence is MRDNNNNNTREEERSSSSKQQQPQAPMSLK. Residues 31–51 form a helical membrane-spanning segment; it reads IIDSCLRLSVVPLSVATIWLT. Topologically, residues 52–74 are extracellular; that stretch reads VTNHESNPDYGNLEYNSIMGLKY. Residues 75–95 form a helical membrane-spanning segment; sequence MVGVSAISAIYALLSTVSSWV. Topologically, residues 96–110 are cytoplasmic; sequence TCLVSKAWLFFIPDQ. Residues 111 to 133 form a helical membrane-spanning segment; it reads VLAYVMTTSVAGATEIVYLLNKG. At 134-152 the chain is on the extracellular side; it reads DKIVTWSEMCSSYPHYCSK. Residues 153 to 173 traverse the membrane as a helical segment; it reads LTIALGLHVFVLFFFLFLSVI. Residues 174-194 lie on the Cytoplasmic side of the membrane; sequence SAYRAFSPFDPPCDSQTNNDA.

The protein belongs to the Casparian strip membrane proteins (CASP) family. In terms of assembly, homodimer and heterodimers.

It is found in the cell membrane. The sequence is that of CASP-like protein 2D1 from Arabidopsis thaliana (Mouse-ear cress).